The chain runs to 343 residues: Calcium/calmodulin-dependent protein kinase type 1B (343 aa).

The Protein kinase domain occupies 15 to 270 (YEIRERLGSG…CQQALRHLWI (256 aa)). ATP contacts are provided by residues 21–29 (LGSGAFSEV) and lysine 44. Aspartate 136 (proton acceptor) is an active-site residue. The segment at 290–311 (KNFARTHWKRAFNATSFLRHIR) is calmodulin-binding. The tract at residues 319-343 (GEGASEQGMARHSHSGLRAGQPPKW) is disordered.

This sequence belongs to the protein kinase superfamily. CAMK Ser/Thr protein kinase family. CaMK subfamily. Post-translationally, phosphorylated by CAMKK1.

It is found in the cytoplasm. The protein resides in the nucleus. The catalysed reaction is L-seryl-[protein] + ATP = O-phospho-L-seryl-[protein] + ADP + H(+). The enzyme catalyses L-threonyl-[protein] + ATP = O-phospho-L-threonyl-[protein] + ADP + H(+). Activated by Ca(2+)/calmodulin. Functionally, calcium/calmodulin-dependent protein kinase belonging to a proposed calcium-triggered signaling cascade. In vitro phosphorylates CREB1 and SYN1/synapsin I. Phosphorylates and activates CAMK1. The protein is Calcium/calmodulin-dependent protein kinase type 1B (PNCK) of Homo sapiens (Human).